Reading from the N-terminus, the 194-residue chain is Peptidyl-tRNA hydrolase (194 aa).

Y17 is a binding site for tRNA. H22 (proton acceptor) is an active-site residue. TRNA contacts are provided by F68, N70, and N116.

Belongs to the PTH family. As to quaternary structure, monomer.

The protein localises to the cytoplasm. The catalysed reaction is an N-acyl-L-alpha-aminoacyl-tRNA + H2O = an N-acyl-L-amino acid + a tRNA + H(+). Its function is as follows. Hydrolyzes ribosome-free peptidyl-tRNAs (with 1 or more amino acids incorporated), which drop off the ribosome during protein synthesis, or as a result of ribosome stalling. Catalyzes the release of premature peptidyl moieties from peptidyl-tRNA molecules trapped in stalled 50S ribosomal subunits, and thus maintains levels of free tRNAs and 50S ribosomes. The polypeptide is Peptidyl-tRNA hydrolase (Actinobacillus succinogenes (strain ATCC 55618 / DSM 22257 / CCUG 43843 / 130Z)).